We begin with the raw amino-acid sequence, 336 residues long: NADH-quinone oxidoreductase subunit H (336 aa).

Helical transmembrane passes span 12–32 (FLKIVIVFSLALGIGAYLTWF), 84–104 (VVMALVPSILLLTIIPFGPGF), 118–138 (VNIALLLAFAFGSLSVYGTIF), 156–176 (AAVVIAYEVVLGFSVLGVILL), 193–213 (GVWFIFYQPVAFILYLFCMLA), 247–267 (LAEWYVNVIALSAIAVVLFFG), 274–294 (IFGPLSPYFWFVFKTFALVFF), and 313–333 (IAWKILLPIAILNVIITAVVV).

The protein belongs to the complex I subunit 1 family. As to quaternary structure, NDH-1 is composed of 14 different subunits. Subunits NuoA, H, J, K, L, M, N constitute the membrane sector of the complex.

The protein localises to the cell inner membrane. The catalysed reaction is a quinone + NADH + 5 H(+)(in) = a quinol + NAD(+) + 4 H(+)(out). Its function is as follows. NDH-1 shuttles electrons from NADH, via FMN and iron-sulfur (Fe-S) centers, to quinones in the respiratory chain. The immediate electron acceptor for the enzyme in this species is believed to be ubiquinone. Couples the redox reaction to proton translocation (for every two electrons transferred, four hydrogen ions are translocated across the cytoplasmic membrane), and thus conserves the redox energy in a proton gradient. This subunit may bind ubiquinone. In Aquifex aeolicus (strain VF5), this protein is NADH-quinone oxidoreductase subunit H.